The chain runs to 304 residues: Pseudouridine-5'-phosphate glycosidase (304 aa).

Residue Glu-25 is the Proton donor of the active site. Substrate is bound by residues Lys-88 and Val-108. Asp-140 contributes to the Mn(2+) binding site. A substrate-binding site is contributed by 142–144; that stretch reads SAD. Lys-161 serves as the catalytic Nucleophile.

It belongs to the pseudouridine-5'-phosphate glycosidase family. As to quaternary structure, homotrimer. Mn(2+) is required as a cofactor.

It carries out the reaction D-ribose 5-phosphate + uracil = psi-UMP + H2O. Catalyzes the reversible cleavage of pseudouridine 5'-phosphate (PsiMP) to ribose 5-phosphate and uracil. Functions biologically in the cleavage direction, as part of a pseudouridine degradation pathway. The polypeptide is Pseudouridine-5'-phosphate glycosidase (Paracoccus denitrificans (strain Pd 1222)).